A 555-amino-acid chain; its full sequence is Formate--tetrahydrofolate ligase (555 aa).

Residue 63-70 participates in ATP binding; the sequence is TPAGEGKT.

Belongs to the formate--tetrahydrofolate ligase family.

It catalyses the reaction (6S)-5,6,7,8-tetrahydrofolate + formate + ATP = (6R)-10-formyltetrahydrofolate + ADP + phosphate. It participates in one-carbon metabolism; tetrahydrofolate interconversion. This Beijerinckia indica subsp. indica (strain ATCC 9039 / DSM 1715 / NCIMB 8712) protein is Formate--tetrahydrofolate ligase.